Here is a 502-residue protein sequence, read N- to C-terminus: Hexokinase-4 (502 aa).

Residues 4-24 (VLVMLTAAAAVVACSVATVMV) traverse the membrane as a helical segment. The 457-residue stretch at 35–491 (RRVVGLLKDL…SSIGSALLLA (457 aa)) folds into the Hexokinase domain. The tract at residues 90–228 (NGSETGTYYA…GLDIRVAALV (139 aa)) is hexokinase small subdomain. 2 residues coordinate ADP: G104 and S105. 4 residues coordinate D-glucose: T194, K195, N229, and D230. Positions 229 to 480 (NDTVGALSFG…QHVVVKAMED (252 aa)) are hexokinase large subdomain. T253 is a binding site for ADP. D-glucose contacts are provided by N256, E284, and E315. Residue G445 coordinates ADP.

This sequence belongs to the hexokinase family.

The protein resides in the mitochondrion outer membrane. It catalyses the reaction a D-hexose + ATP = a D-hexose 6-phosphate + ADP + H(+). The enzyme catalyses D-fructose + ATP = D-fructose 6-phosphate + ADP + H(+). The catalysed reaction is D-glucose + ATP = D-glucose 6-phosphate + ADP + H(+). It participates in carbohydrate metabolism; hexose metabolism. Its pathway is carbohydrate degradation; glycolysis; D-glyceraldehyde 3-phosphate and glycerone phosphate from D-glucose: step 1/4. Fructose and glucose phosphorylating enzyme. May be involved in the phosphorylation of glucose during the export from mitochondrion to cytosol. This is Hexokinase-4 from Arabidopsis thaliana (Mouse-ear cress).